We begin with the raw amino-acid sequence, 495 residues long: Acetyl-coenzyme A carboxylase carboxyl transferase subunit beta, chloroplastic (495 aa).

A disordered region spans residues 188-208; the sequence is SRNSSENEGSSRRTRTKGSDL. A CoA carboxyltransferase N-terminal domain is found at 226–495; it reads LWVQCENCYG…PLNQKSSKIK (270 aa). The Zn(2+) site is built by cysteine 230, cysteine 233, cysteine 249, and cysteine 252. The C4-type zinc-finger motif lies at 230 to 252; that stretch reads CENCYGLNYKKFFKSKMNICEQC.

This sequence belongs to the AccD/PCCB family. As to quaternary structure, acetyl-CoA carboxylase is a heterohexamer composed of biotin carboxyl carrier protein, biotin carboxylase and 2 subunits each of ACCase subunit alpha and ACCase plastid-coded subunit beta (accD). It depends on Zn(2+) as a cofactor.

It localises to the plastid. The protein resides in the chloroplast stroma. The catalysed reaction is N(6)-carboxybiotinyl-L-lysyl-[protein] + acetyl-CoA = N(6)-biotinyl-L-lysyl-[protein] + malonyl-CoA. It participates in lipid metabolism; malonyl-CoA biosynthesis; malonyl-CoA from acetyl-CoA: step 1/1. Functionally, component of the acetyl coenzyme A carboxylase (ACC) complex. Biotin carboxylase (BC) catalyzes the carboxylation of biotin on its carrier protein (BCCP) and then the CO(2) group is transferred by the transcarboxylase to acetyl-CoA to form malonyl-CoA. The chain is Acetyl-coenzyme A carboxylase carboxyl transferase subunit beta, chloroplastic from Nicotiana tomentosiformis (Tobacco).